The sequence spans 426 residues: 6-Hydroxy-7-prenyldeoxybrevianamide E synthase notC (426 aa).

Glu-94 contributes to the substrate binding site. Dimethylallyl diphosphate-binding residues include Arg-105, Lys-191, and Tyr-193. Tyr-195 contributes to the substrate binding site. The dimethylallyl diphosphate site is built by Lys-267, Tyr-269, Gln-352, Tyr-354, Tyr-418, and Tyr-422.

The protein belongs to the tryptophan dimethylallyltransferase family.

It carries out the reaction 6-hydroxydeoxybrevianamide E + dimethylallyl diphosphate = notoamide S + diphosphate. The protein operates within alkaloid biosynthesis. With respect to regulation, addition of 5 mM Mg(2+), Ca(2+) or Mn(2+) slightly enhances catalysis (about 100-120%). Significant reduction of enzyme activity (2%-35%) is observed with Cu(2+), Zn(2+), Fe(2+), or Sn(2+) (5 mM). In terms of biological role, prenyltransferase; part of the gene cluster that mediates the biosynthesis of notoamide, a fungal indole alkaloid that belongs to a family of natural products containing a characteristic bicyclo[2.2.2]diazaoctane core. The first step of notoamide biosynthesis involves coupling of L-proline and L-tryptophan by the bimodular NRPS notE, to produce cyclo-L-tryptophan-L-proline called brevianamide F. The reverse prenyltransferase notF then acts as a deoxybrevianamide E synthase and converts brevianamide F to deoxybrevianamide E via reverse prenylation at C-2 of the indole ring leading to the bicyclo[2.2.2]diazaoctane core. Deoxybrevianamide E is further hydroxylated at C-6 of the indole ring, likely catalyzed by the cytochrome P450 monooxygenase notG, to yield 6-hydroxy-deoxybrevianamide E. 6-hydroxy-deoxybrevianamide E is a specific substrate of the prenyltransferase notC for normal prenylation at C-7 to produce 6-hydroxy-7-prenyl-deoxybrevianamide, also called notoamide S. As the proposed pivotal branching point in notoamide biosynthesis, notoamide S can be diverted to notoamide E through an oxidative pyran ring closure putatively catalyzed by either notH cytochrome P450 monooxygenase or the notD FAD-linked oxidoreductase. This step would be followed by an indole 2,3-epoxidation-initiated pinacol-like rearrangement catalyzed by the notB FAD-dependent monooxygenase leading to the formation of notoamide C and notoamide D. On the other hand notoamide S is converted to notoamide T by notH (or notD), a bifunctional oxidase that also functions as the intramolecular Diels-Alderase responsible for generation of (+)-notoamide T. To generate antipodal (-)-notoaminide T, notH' (or notD') in Aspergillus versicolor is expected to catalyze a Diels-Alder reaction leading to the opposite stereochemistry. The remaining oxidoreductase notD (or notH) likely catalyzes the oxidative pyran ring formation to yield (+)-stephacidin A. The FAD-dependent monooxygenase notI is highly similar to notB and is predicted to catalyze a similar conversion from (+)-stephacidin A to (-)-notoamide B via the 2,3-epoxidation of (+)-stephacidin A followed by a pinacol-type rearrangement. Finally, it remains unclear which enzyme could be responsible for the final hydroxylation steps leading to notoamide A and sclerotiamide. This is 6-Hydroxy-7-prenyldeoxybrevianamide E synthase notC from Aspergillus sp. (strain MF297-2).